The sequence spans 344 residues: Acyl-CoA ligase clz12 (344 aa).

2 AMP-binding regions span residues 2 to 239 (VQRS…IIKV) and 248 to 322 (ELET…PSGK).

The protein belongs to the ATP-dependent AMP-binding enzyme family.

Its pathway is secondary metabolite biosynthesis. Acyl-CoA ligase; part of the gene cluster that mediates the biosynthesis of squalestatin S1 (SQS1, also known as zaragozic acid A), a heavily oxidized fungal polyketide that offers potent cholesterol lowering activity by targeting squalene synthase (SS). SQS1 is composed of a 2,8-dioxobicyclic[3.2.1]octane-3,4,5-tricarboxyclic acid core that is connected to two lipophilic polyketide arms. These initial steps feature the priming of an unusual benzoic acid starter unit onto the highly reducing polyketide synthase clz14, followed by oxaloacetate extension and product release to generate a tricarboxylic acid containing product. The phenylalanine ammonia lyase (PAL) clz10 and the acyl-CoA ligase clz12 are involved in transforming phenylalanine into benzoyl-CoA. The citrate synthase-like protein clz17 is involved in connecting the C-alpha-carbons of the hexaketide chain and oxaloacetate to afford the tricarboxylic acid unit. The potential hydrolytic enzymes, clz11 and clz13, are in close proximity to pks2 and may participate in product release. On the other side, the tetraketide arm is synthesized by a the squalestatin tetraketide synthase clz2 and enzymatically esterified to the core in the last biosynthetic step, by the acetyltransferase clz6. The biosynthesis of the tetraketide must involve 3 rounds of chain extension. After the first and second rounds methyl-transfer occurs, and in all rounds of extension the ketoreductase and dehydratase are active. The enoyl reductase and C-MeT of clz2 are not active in the final round of extension. The acetyltransferase clz6 appears to have a broad substrate selectivity for its acyl CoA substrate, allowing the in vitro synthesis of novel squalestatins. The biosynthesis of SQS1 requires several oxidative steps likely performed by oxidoreductases clz3, clz15 and clz16. Finally, in support of the identification of the cluster as being responsible for SQS1 production, the cluster contains a gene encoding a putative squalene synthase (SS) clz20, suggesting a likely mechanism for self-resistance. This is Acyl-CoA ligase clz12 from Cochliobolus lunatus (Filamentous fungus).